A 96-amino-acid chain; its full sequence is uncharacterized protein (96 aa).

2 helical membrane-spanning segments follow: residues Leu27–Ile47 and Leu50–Phe70.

Its subcellular location is the cell membrane. This is an uncharacterized protein from Haemophilus influenzae (strain ATCC 51907 / DSM 11121 / KW20 / Rd).